The sequence spans 475 residues: Adenosylhomocysteinase (475 aa).

Positions 66, 141, and 201 each coordinate substrate. NAD(+) is bound at residue 202–204 (TTT). Lys-231 and Asp-235 together coordinate substrate. NAD(+)-binding positions include Asn-236, 265–270 (GYGEVG), Glu-288, Asn-323, 344–346 (IGH), and Asn-389.

The protein belongs to the adenosylhomocysteinase family. The cofactor is NAD(+).

The protein resides in the cytoplasm. It carries out the reaction S-adenosyl-L-homocysteine + H2O = L-homocysteine + adenosine. Its pathway is amino-acid biosynthesis; L-homocysteine biosynthesis; L-homocysteine from S-adenosyl-L-homocysteine: step 1/1. May play a key role in the regulation of the intracellular concentration of adenosylhomocysteine. In Geobacter sulfurreducens (strain ATCC 51573 / DSM 12127 / PCA), this protein is Adenosylhomocysteinase.